We begin with the raw amino-acid sequence, 511 residues long: GMP synthase [glutamine-hydrolyzing] (511 aa).

Positions 6 to 196 (LVLVLDFGSQ…VFDVCGCTGD (191 aa)) constitute a Glutamine amidotransferase type-1 domain. Cys-83 serves as the catalytic Nucleophile. Residues His-170 and Glu-172 contribute to the active site. One can recognise a GMPS ATP-PPase domain in the interval 197–386 (WSIENFIDME…LGVPDRIVWR (190 aa)). An ATP-binding site is contributed by 224–230 (SGGVDSS).

In terms of assembly, homodimer.

It carries out the reaction XMP + L-glutamine + ATP + H2O = GMP + L-glutamate + AMP + diphosphate + 2 H(+). It functions in the pathway purine metabolism; GMP biosynthesis; GMP from XMP (L-Gln route): step 1/1. In terms of biological role, catalyzes the synthesis of GMP from XMP. The protein is GMP synthase [glutamine-hydrolyzing] of Oceanobacillus iheyensis (strain DSM 14371 / CIP 107618 / JCM 11309 / KCTC 3954 / HTE831).